A 98-amino-acid chain; its full sequence is NADH-ubiquinone oxidoreductase chain 4L (98 aa).

Transmembrane regions (helical) follow at residues Pro2–Phe22, Ser28–Ile48, and Ile61–Val81.

It belongs to the complex I subunit 4L family. In terms of assembly, core subunit of respiratory chain NADH dehydrogenase (Complex I) which is composed of 45 different subunits.

It localises to the mitochondrion inner membrane. It carries out the reaction a ubiquinone + NADH + 5 H(+)(in) = a ubiquinol + NAD(+) + 4 H(+)(out). In terms of biological role, core subunit of the mitochondrial membrane respiratory chain NADH dehydrogenase (Complex I) which catalyzes electron transfer from NADH through the respiratory chain, using ubiquinone as an electron acceptor. Part of the enzyme membrane arm which is embedded in the lipid bilayer and involved in proton translocation. The chain is NADH-ubiquinone oxidoreductase chain 4L (MT-ND4L) from Allocebus trichotis (Hairy-eared dwarf lemur).